The primary structure comprises 537 residues: Glucose-6-phosphate isomerase (537 aa).

Catalysis depends on Glu341, which acts as the Proton donor. Residues His372 and Lys501 contribute to the active site.

The protein belongs to the GPI family.

It is found in the cytoplasm. It carries out the reaction alpha-D-glucose 6-phosphate = beta-D-fructose 6-phosphate. It functions in the pathway carbohydrate biosynthesis; gluconeogenesis. It participates in carbohydrate degradation; glycolysis; D-glyceraldehyde 3-phosphate and glycerone phosphate from D-glucose: step 2/4. Its function is as follows. Catalyzes the reversible isomerization of glucose-6-phosphate to fructose-6-phosphate. This Jannaschia sp. (strain CCS1) protein is Glucose-6-phosphate isomerase.